The sequence spans 756 residues: Neutral ceramidase (756 aa).

Topologically, residues 1 to 11 (MAKRTFSTLEA) are cytoplasmic. A helical; Signal-anchor for type II membrane protein transmembrane segment spans residues 12–32 (FLIFLLVIMTVITVALLTLLF). The Lumenal segment spans residues 33 to 756 (VTSGTIENHK…ISSPFEVVTT (724 aa)). 4 O-linked (GalNAc...) threonine glycosylation sites follow: Thr-56, Thr-57, Thr-58, and Thr-64. Position 110 (Leu-110) interacts with Ca(2+). His-170 lines the Zn(2+) pocket. Asn-193 is a glycosylation site (N-linked (GlcNAc...) asparagine). His-279 is a Zn(2+) binding site. The active-site Nucleophile is Ser-330. 2 disulfides stabilise this stretch: Cys-338/Cys-352 and Cys-345/Cys-360. N-linked (GlcNAc...) asparagine glycosylation is found at Asn-407 and Asn-444. Cys-424 and Cys-474 form a disulfide bridge. Zn(2+) contacts are provided by Glu-516 and Tyr-555. Ca(2+) is bound by residues Asp-688, Ser-690, and Thr-693. The interval 746–756 (GISSPFEVVTT) is required for correct folding and localization.

It belongs to the neutral ceramidase family. As to quaternary structure, may interact with CAV1. Zn(2+) is required as a cofactor. In terms of processing, proteolytic cleavage of the N-terminus removes the signal-anchor and produces a soluble form of the protein. N-glycosylated. Required for enzyme activity. Post-translationally, O-glycosylated. Required to retain it as a type II membrane protein at the cell surface. In terms of processing, phosphorylated. May prevent ubiquitination and subsequent degradation. Ubiquitinated, leading to its degradation by the proteasome. Ubiquitination is triggered by nitric oxide. As to expression, widely expressed. Strongly expressed in small intestine and to a lower extent in liver and kidney. Highly expressed in duodenum, jejunum and ileum along the brush border of the small intestine (at protein level).

The protein resides in the cell membrane. Its subcellular location is the membrane raft. It is found in the membrane. It localises to the caveola. The protein localises to the golgi apparatus membrane. The protein resides in the mitochondrion. Its subcellular location is the secreted. It is found in the extracellular exosome. It catalyses the reaction an N-acylsphing-4-enine + H2O = sphing-4-enine + a fatty acid. It carries out the reaction N-hexadecanoylsphing-4-enine + H2O = sphing-4-enine + hexadecanoate. The enzyme catalyses N-dodecanoylsphing-4-enine + H2O = dodecanoate + sphing-4-enine. The catalysed reaction is N-octadecanoylsphing-4-enine + H2O = sphing-4-enine + octadecanoate. It catalyses the reaction N-octanoylsphing-4-enine + H2O = octanoate + sphing-4-enine. It carries out the reaction N-(hexanoyl)sphing-4-enine + H2O = hexanoate + sphing-4-enine. The enzyme catalyses N-tetradecanoylsphing-4-enine + H2O = tetradecanoate + sphing-4-enine. The catalysed reaction is N-(9Z-octadecenoyl)-sphing-4-enine + H2O = sphing-4-enine + (9Z)-octadecenoate. It catalyses the reaction N-(15Z-tetracosenoyl)-sphing-4-enine + H2O = (15Z)-tetracosenoate + sphing-4-enine. It carries out the reaction sphinganine + hexadecanoate = N-hexadecanoylsphinganine + H2O. The enzyme catalyses N-(octadecanoyl)-sphinganine + H2O = sphinganine + octadecanoate. Its pathway is lipid metabolism; sphingolipid metabolism. Its activity is regulated as follows. Inhibited by D-erythro-MAPP. Plasma membrane ceramidase that hydrolyzes sphingolipid ceramides into sphingosine and free fatty acids at neutral pH. Ceramides, sphingosine, and its phosphorylated form sphingosine-1-phosphate are bioactive lipids that mediate cellular signaling pathways regulating several biological processes including cell proliferation, apoptosis and differentiation. Also catalyzes the reverse reaction allowing the synthesis of ceramides from fatty acids and sphingosine. Together with sphingomyelinase, participates in the production of sphingosine and sphingosine-1-phosphate from the degradation of sphingomyelin, a sphingolipid enriched in the plasma membrane of cells. Also participates in the hydrolysis of ceramides from the extracellular milieu allowing the production of sphingosine-1-phosphate inside and outside cells. This is the case for instance with the digestion of dietary sphingolipids in the intestinal tract. This chain is Neutral ceramidase (Asah2), found in Mus musculus (Mouse).